The sequence spans 239 residues: MATPHINAEMGDFADVVLMPGDPLRAKFIAETFLDDAREVNNVRGMLGFTGTYKGRKISVMGHGMGIPSCSIYAKELITEFGVKKIIRVGSCGAVREDVKLRDVVIGMGACTDSKVNRMRFKDHDYAAIADFDMVRNAVDAAKARDVSVRVGNIFSADLFYTPDPQMFDVMEKYGILGVEMEAAGIYGVAAEFGAKALAICTVSDHIRTGAQTTSEERQTTFNEMIEIALESVLLGDNE.

His-5 contributes to the a purine D-ribonucleoside binding site. Phosphate contacts are provided by residues Gly-21, Arg-25, Arg-44, and 88–91 (RVGS). A purine D-ribonucleoside contacts are provided by residues 180-182 (EME) and 204-205 (SD). The active-site Proton donor is the Asp-205.

This sequence belongs to the PNP/UDP phosphorylase family. In terms of assembly, homohexamer; trimer of homodimers.

It catalyses the reaction a purine D-ribonucleoside + phosphate = a purine nucleobase + alpha-D-ribose 1-phosphate. The catalysed reaction is a purine 2'-deoxy-D-ribonucleoside + phosphate = a purine nucleobase + 2-deoxy-alpha-D-ribose 1-phosphate. Functionally, catalyzes the reversible phosphorolytic breakdown of the N-glycosidic bond in the beta-(deoxy)ribonucleoside molecules, with the formation of the corresponding free purine bases and pentose-1-phosphate. The chain is Purine nucleoside phosphorylase DeoD-type from Pectobacterium atrosepticum (strain SCRI 1043 / ATCC BAA-672) (Erwinia carotovora subsp. atroseptica).